A 570-amino-acid polypeptide reads, in one-letter code: Glycine--tRNA ligase (570 aa).

Positions 99 and 165 each coordinate substrate. ATP-binding positions include arginine 197–glutamate 199, leucine 207–phenylalanine 212, glutamate 324–cysteine 325, and glycine 443–arginine 446. Phenylalanine 212–glutamate 216 provides a ligand contact to substrate. Residue glutamate 439–glycine 443 coordinates substrate.

It belongs to the class-II aminoacyl-tRNA synthetase family.

It is found in the cytoplasm. It carries out the reaction tRNA(Gly) + glycine + ATP = glycyl-tRNA(Gly) + AMP + diphosphate. In terms of biological role, catalyzes the attachment of glycine to tRNA(Gly). In Thermococcus gammatolerans (strain DSM 15229 / JCM 11827 / EJ3), this protein is Glycine--tRNA ligase.